The primary structure comprises 225 residues: Esterase OVCA2 (225 aa).

Active-site charge relay system residues include Ser119, Asp177, and His204.

Belongs to the LovG family. As to expression, strongly expressed in kidney and liver. Moderately expressed in brain, skin and testis. Weakly expressed in heart, lung, small intestine, spleen, stomach and thymus.

It carries out the reaction a carboxylic ester + H2O = an alcohol + a carboxylate + H(+). Its function is as follows. Exhibits ester hydrolase activity with a strong preference for long-chain alkyl ester substrates and high selectivity against a variety of short, branched, and substituted esters. Is able to hydrolyze ester bonds within a wide range of p-nitrophenyl derivatives (C2-C14) in vitro, with a strong preference toward substrates of &gt;8 carbons. The sequence is that of Esterase OVCA2 (Ovca2) from Mus musculus (Mouse).